The sequence spans 117 residues: Large ribosomal subunit protein uL18 (117 aa).

The protein belongs to the universal ribosomal protein uL18 family. Part of the 50S ribosomal subunit; part of the 5S rRNA/L5/L18/L25 subcomplex. Contacts the 5S and 23S rRNAs.

In terms of biological role, this is one of the proteins that bind and probably mediate the attachment of the 5S RNA into the large ribosomal subunit, where it forms part of the central protuberance. The polypeptide is Large ribosomal subunit protein uL18 (Phytoplasma mali (strain AT)).